The following is a 372-amino-acid chain: Chorismate synthase (372 aa).

Residues Arg48 and Arg54 each contribute to the NADP(+) site. FMN-binding positions include 125 to 127, 238 to 239, Gly278, 293 to 297, and Arg319; these read RSS, NA, and KPTSS.

It belongs to the chorismate synthase family. In terms of assembly, homotetramer. The cofactor is FMNH2.

The enzyme catalyses 5-O-(1-carboxyvinyl)-3-phosphoshikimate = chorismate + phosphate. It functions in the pathway metabolic intermediate biosynthesis; chorismate biosynthesis; chorismate from D-erythrose 4-phosphate and phosphoenolpyruvate: step 7/7. In terms of biological role, catalyzes the anti-1,4-elimination of the C-3 phosphate and the C-6 proR hydrogen from 5-enolpyruvylshikimate-3-phosphate (EPSP) to yield chorismate, which is the branch point compound that serves as the starting substrate for the three terminal pathways of aromatic amino acid biosynthesis. This reaction introduces a second double bond into the aromatic ring system. The sequence is that of Chorismate synthase from Xylella fastidiosa (strain 9a5c).